Consider the following 261-residue polypeptide: Cytochrome c oxidase subunit 3 (261 aa).

Residues 1–15 (MAHQAHAYHMVDPSP) lie on the Mitochondrial matrix side of the membrane. Residues 16 to 34 (WPLTGAIGALFLTSGLAIW) traverse the membrane as a helical segment. Topologically, residues 35–40 (FHFQSV) are mitochondrial intermembrane. The helical transmembrane segment at 41–66 (TLLTLGLILLLLTMYQWWRDIIREGT) threads the bilayer. Residues 67 to 72 (FQGHHT) are Mitochondrial matrix-facing. The chain crosses the membrane as a helical span at residues 73 to 105 (PPVQKGLRYGMILFITSEVFFFLGFFWAFYHSS). Topologically, residues 106-128 (LAPTPELGGCWPPTGITPLDPFE) are mitochondrial intermembrane. Residues 129-152 (VPLLNTAVLLASGVTVTWAHHSLM) traverse the membrane as a helical segment. Topologically, residues 153 to 155 (EGA) are mitochondrial matrix. The chain crosses the membrane as a helical span at residues 156–183 (RKQAIQALALTIILGVYFTALQAMEYYE). Over 184 to 190 (APFTIAD) the chain is Mitochondrial intermembrane. A helical membrane pass occupies residues 191–223 (GVYGSTFFVATGFHGLHVIIGSSFLAVCLLRQI). The Mitochondrial matrix portion of the chain corresponds to 224–232 (QYHFTSEHH). The chain crosses the membrane as a helical span at residues 233–256 (FGFEAAAWYWHFVDVVWLFLYVSI). The Mitochondrial intermembrane segment spans residues 257-261 (YWWGS).

The protein belongs to the cytochrome c oxidase subunit 3 family. Component of the cytochrome c oxidase (complex IV, CIV), a multisubunit enzyme composed of 14 subunits. The complex is composed of a catalytic core of 3 subunits MT-CO1, MT-CO2 and MT-CO3, encoded in the mitochondrial DNA, and 11 supernumerary subunits COX4I, COX5A, COX5B, COX6A, COX6B, COX6C, COX7A, COX7B, COX7C, COX8 and NDUFA4, which are encoded in the nuclear genome. The complex exists as a monomer or a dimer and forms supercomplexes (SCs) in the inner mitochondrial membrane with NADH-ubiquinone oxidoreductase (complex I, CI) and ubiquinol-cytochrome c oxidoreductase (cytochrome b-c1 complex, complex III, CIII), resulting in different assemblies (supercomplex SCI(1)III(2)IV(1) and megacomplex MCI(2)III(2)IV(2)).

It is found in the mitochondrion inner membrane. The enzyme catalyses 4 Fe(II)-[cytochrome c] + O2 + 8 H(+)(in) = 4 Fe(III)-[cytochrome c] + 2 H2O + 4 H(+)(out). Component of the cytochrome c oxidase, the last enzyme in the mitochondrial electron transport chain which drives oxidative phosphorylation. The respiratory chain contains 3 multisubunit complexes succinate dehydrogenase (complex II, CII), ubiquinol-cytochrome c oxidoreductase (cytochrome b-c1 complex, complex III, CIII) and cytochrome c oxidase (complex IV, CIV), that cooperate to transfer electrons derived from NADH and succinate to molecular oxygen, creating an electrochemical gradient over the inner membrane that drives transmembrane transport and the ATP synthase. Cytochrome c oxidase is the component of the respiratory chain that catalyzes the reduction of oxygen to water. Electrons originating from reduced cytochrome c in the intermembrane space (IMS) are transferred via the dinuclear copper A center (CU(A)) of subunit 2 and heme A of subunit 1 to the active site in subunit 1, a binuclear center (BNC) formed by heme A3 and copper B (CU(B)). The BNC reduces molecular oxygen to 2 water molecules using 4 electrons from cytochrome c in the IMS and 4 protons from the mitochondrial matrix. This Formosania lacustris (Oriental stream loach) protein is Cytochrome c oxidase subunit 3 (mt-co3).